Consider the following 73-residue polypeptide: Hypotensin-like peptide (73 aa).

A signal peptide spans 1–25; the sequence is MKMMIAIVFVSILLLMFSLSSTAMG.

As to expression, expressed by the venom gland.

It is found in the secreted. Its function is as follows. May potentiate the hypotensive effect of bradykinin. This Tityus serrulatus (Brazilian scorpion) protein is Hypotensin-like peptide.